The sequence spans 425 residues: Enolase (425 aa).

Gln-170 serves as a coordination point for (2R)-2-phosphoglycerate. Glu-214 functions as the Proton donor in the catalytic mechanism. Mg(2+)-binding residues include Asp-250, Glu-291, and Asp-317. Positions 342, 371, 372, and 393 each coordinate (2R)-2-phosphoglycerate. Lys-342 functions as the Proton acceptor in the catalytic mechanism.

Belongs to the enolase family. It depends on Mg(2+) as a cofactor.

It localises to the cytoplasm. The protein localises to the secreted. It is found in the cell surface. It catalyses the reaction (2R)-2-phosphoglycerate = phosphoenolpyruvate + H2O. The protein operates within carbohydrate degradation; glycolysis; pyruvate from D-glyceraldehyde 3-phosphate: step 4/5. Functionally, catalyzes the reversible conversion of 2-phosphoglycerate (2-PG) into phosphoenolpyruvate (PEP). It is essential for the degradation of carbohydrates via glycolysis. The polypeptide is Enolase (Methanococcoides burtonii (strain DSM 6242 / NBRC 107633 / OCM 468 / ACE-M)).